Consider the following 513-residue polypeptide: Noroxomaritidine synthase 2 (513 aa).

The helical transmembrane segment at 14 to 34 (HYPEILIAIACFLIFSLLLSA) threads the bilayer. Residue cysteine 458 participates in heme binding.

Belongs to the cytochrome P450 family. It depends on heme as a cofactor.

It is found in the membrane. The catalysed reaction is 4'-O-methylnorbelladine + reduced [NADPH--hemoprotein reductase] + O2 = (10bR,4aS)-noroxomaritidine + oxidized [NADPH--hemoprotein reductase] + 2 H2O + H(+). The enzyme catalyses 4'-O-methylnorbelladine + reduced [NADPH--hemoprotein reductase] + O2 = (10bS,4aR)-noroxomaritidine + oxidized [NADPH--hemoprotein reductase] + 2 H2O + H(+). It participates in alkaloid biosynthesis. Functionally, cytochrome P450 that catalyzes an intramolecular para-para' C-C phenol coupling of 4'-O-methylnorbelladine in alkaloids biosynthesis, including haemanthamine- and crinamine-type alkaloids, promising anticancer agents. Catalyzes the formation of (10bR,4aS)-noroxomaritidine and (10bS,4aR)-noroxomaritidine from 4'-O-methylnorbelladine. This chain is Noroxomaritidine synthase 2, found in Narcissus aff. pseudonarcissus MK-2014 (Daffodil).